Reading from the N-terminus, the 689-residue chain is MSEKTFLVEIGTEELPPKALRSLAESFAANFTAELDNAGLAHGNVEWFAAPRRLALKVANLAESQPDREVEKRGPAIAQAFDAEGKPSKAAEGWARGCGITVDQAERLKTDKGEWLLYRAHVKGESTEALVPNMVATSLAKLPIPKLMRWGASDVHFVRPVHTVTLLLGDKVIPATILGIQSDRVIRGHRFMGEPEFTIDNADQYPQILLERGKVIADYEARKAKIKADAEEAARKIGGNADLSESLLEEVASLVEWPVVLTAKFEEKFLAVPAEALVYTMKGDQKYFPVYDNAGKLLPNFIFVANIESKDPTQIISGNEKVVRPRLADAEFFFNTDRKKRLEDHLPRLQTVLFQQQLGTLRDKTDRIQALAGWIAGQIGADVNHATRAGLLSKCDLMTNMVFEFTDTQGVMGMHYARHDGEAEDVAVALNEQYQPRFAGDDLPSNPVACALAIADKMDTLAGIFGIGQHPKGDKDPFALRRAALGVLRIIVEKNLALDLQTLTEEAVRLYGDKLTNANVVDDVIDFMLGRFRAWYQDEGYTVDTIQAVLARRPTRPADFDARMKAVSHFRTLEEASALAAANKRVSNILAKATEPLNDIVHASVLKEAAEIELARHLVVLRDKLQPYFADGRYQEALIELAALRAPVDEFFENVMVNAKEKDIRINRLTLLSKLRELFLQVADISLLQ.

It belongs to the class-II aminoacyl-tRNA synthetase family. In terms of assembly, tetramer of two alpha and two beta subunits.

The protein localises to the cytoplasm. It carries out the reaction tRNA(Gly) + glycine + ATP = glycyl-tRNA(Gly) + AMP + diphosphate. This chain is Glycine--tRNA ligase beta subunit, found in Salmonella paratyphi C (strain RKS4594).